The primary structure comprises 497 residues: Glutamyl-tRNA reductase (497 aa).

Residues threonine 58 to arginine 61, serine 118, glutamate 123 to glutamine 125, and glutamine 129 contribute to the substrate site. Catalysis depends on cysteine 59, which acts as the Nucleophile. NADP(+) is bound at residue glycine 214 to alanine 219. Over residues valine 461–threonine 477 the composition is skewed to polar residues. The segment at valine 461 to serine 486 is disordered.

The protein belongs to the glutamyl-tRNA reductase family. As to quaternary structure, homodimer.

It catalyses the reaction (S)-4-amino-5-oxopentanoate + tRNA(Glu) + NADP(+) = L-glutamyl-tRNA(Glu) + NADPH + H(+). It participates in porphyrin-containing compound metabolism; protoporphyrin-IX biosynthesis; 5-aminolevulinate from L-glutamyl-tRNA(Glu): step 1/2. Functionally, catalyzes the NADPH-dependent reduction of glutamyl-tRNA(Glu) to glutamate 1-semialdehyde (GSA). The protein is Glutamyl-tRNA reductase of Corynebacterium jeikeium (strain K411).